The primary structure comprises 148 residues: UPF0591 membrane protein C15E1.02c (148 aa).

Transmembrane regions (helical) follow at residues 14 to 34, 80 to 102, and 122 to 142; these read AILLGIAFDHAASFLVYGPLM, LLQLTGTVTLKGAFFVGLYVFGA, and ILVKTISSLVKSVGLSVALIG.

This sequence belongs to the UPF0591 family.

Its subcellular location is the membrane. The sequence is that of UPF0591 membrane protein C15E1.02c from Schizosaccharomyces pombe (strain 972 / ATCC 24843) (Fission yeast).